The sequence spans 147 residues: Phosphoribosyl-AMP cyclohydrolase 2 (147 aa).

Mg(2+) is bound at residue aspartate 99. Cysteine 100 serves as a coordination point for Zn(2+). Mg(2+) contacts are provided by aspartate 101 and aspartate 103. 2 residues coordinate Zn(2+): cysteine 116 and cysteine 123.

It belongs to the PRA-CH family. As to quaternary structure, homodimer. Requires Mg(2+) as cofactor. Zn(2+) is required as a cofactor.

It is found in the cytoplasm. It carries out the reaction 1-(5-phospho-beta-D-ribosyl)-5'-AMP + H2O = 1-(5-phospho-beta-D-ribosyl)-5-[(5-phospho-beta-D-ribosylamino)methylideneamino]imidazole-4-carboxamide. It functions in the pathway amino-acid biosynthesis; L-histidine biosynthesis; L-histidine from 5-phospho-alpha-D-ribose 1-diphosphate: step 3/9. Functionally, catalyzes the hydrolysis of the adenine ring of phosphoribosyl-AMP. This is Phosphoribosyl-AMP cyclohydrolase 2 from Pseudomonas fluorescens (strain ATCC BAA-477 / NRRL B-23932 / Pf-5).